The following is a 76-amino-acid chain: Small nuclear ribonucleoprotein G (76 aa).

The 73-residue stretch at 4–76 (AHPPELKKFM…IIMLEALERV (73 aa)) folds into the Sm domain.

The protein belongs to the snRNP Sm proteins family. Core component of the spliceosomal U1, U2, U4 and U5 small nuclear ribonucleoproteins (snRNPs), the building blocks of the spliceosome. Most spliceosomal snRNPs contain a common set of Sm proteins, SNRPB, SNRPD1, SNRPD2, SNRPD3, SNRPE, SNRPF and SNRPG that assemble in a heptameric protein ring on the Sm site of the small nuclear RNA to form the core snRNP. Component of the U1 snRNP. The U1 snRNP is composed of the U1 snRNA and the 7 core Sm proteins SNRPB, SNRPD1, SNRPD2, SNRPD3, SNRPE, SNRPF and SNRPG, and at least three U1 snRNP-specific proteins SNRNP70/U1-70K, SNRPA/U1-A and SNRPC/U1-C. Component of the U4/U6-U5 tri-snRNP complex composed of the U4, U6 and U5 snRNAs and at least PRPF3, PRPF4, PRPF6, PRPF8, PRPF31, SNRNP200, TXNL4A, SNRNP40, SNRPB, SNRPD1, SNRPD2, SNRPD3, SNRPE, SNRPF, SNRPG, DDX23, CD2BP2, PPIH, SNU13, EFTUD2, SART1 and USP39, plus LSM2, LSM3, LSM4, LSM5, LSM6, LSM7 and LSM8. Component of the U7 snRNP complex, or U7 Sm protein core complex, that is composed of the U7 snRNA and at least LSM10, LSM11, SNRPB, SNRPD3, SNRPE, SNRPF and SNRPG; the complex does not contain SNRPD1 and SNRPD2. Component of the minor spliceosome, which splices U12-type introns. Part of the SMN-Sm complex that contains SMN1, GEMIN2/SIP1, DDX20/GEMIN3, GEMIN4, GEMIN5, GEMIN6, GEMIN7, GEMIN8, STRAP/UNRIP and the Sm proteins SNRPB, SNRPD1, SNRPD2, SNRPD3, SNRPE, SNRPF and SNRPG; catalyzes core snRNPs assembly. Forms a 6S pICln-Sm complex composed of CLNS1A/pICln, SNRPD1, SNRPD2, SNRPE, SNRPF and SNRPG; ring-like structure where CLNS1A/pICln mimics additional Sm proteins and which is unable to assemble into the core snRNP. Interacts with GEMIN2 (via N-terminus); the interaction is direct. Interacts with SNRPE; the interaction is direct.

The protein resides in the cytoplasm. Its subcellular location is the cytosol. It is found in the nucleus. Its function is as follows. Plays a role in pre-mRNA splicing as a core component of the spliceosomal U1, U2, U4 and U5 small nuclear ribonucleoproteins (snRNPs), the building blocks of the spliceosome. Component of both the pre-catalytic spliceosome B complex and activated spliceosome C complexes. As a component of the minor spliceosome, involved in the splicing of U12-type introns in pre-mRNAs. As part of the U7 snRNP it is involved in histone 3'-end processing. The sequence is that of Small nuclear ribonucleoprotein G (SNRPG) from Bos taurus (Bovine).